The sequence spans 570 residues: KH homology domain-containing protein 4 (570 aa).

Residues 1-29 form a disordered region; that stretch reads MSFGVPHSGGSRRSKWDQAGPDADAGSAP. KH domains lie at 77–157 and 210–292; these read DDLV…RIKE and VFVG…NLLQ. Positions 391 to 407 are enriched in pro residues; the sequence is PPTAPVPPKLTAPPNPP. 3 disordered regions span residues 391–410, 438–500, and 512–570; these read PPTA…PQKR, AGMP…EPQV, and GDSS…WMAP. Positions 427–497 are required for nuclear retention; the sequence is QHGPIHMTNL…ESPSAPSLLE (71 aa). Low complexity predominate over residues 553-562; it reads TQTAPQPTQQ.

It belongs to the KHDC4 family. In terms of assembly, interacts with PRPF19.

Its subcellular location is the nucleus. The protein localises to the cytoplasm. Its function is as follows. RNA-binding protein involved in pre-mRNA splicing. Interacts with the PRP19C/Prp19 complex/NTC/Nineteen complex which is part of the spliceosome. Involved in regulating splice site selection. Binds preferentially RNA with A/C rich sequences and poly-C stretches. In Danio rerio (Zebrafish), this protein is KH homology domain-containing protein 4 (khdc4).